The primary structure comprises 185 residues: Large ribosomal subunit protein uL5 (185 aa).

The protein belongs to the universal ribosomal protein uL5 family. Part of the 50S ribosomal subunit; part of the 5S rRNA/L5/L18/L25 subcomplex. Contacts the 5S rRNA and the P site tRNA. Forms a bridge to the 30S subunit in the 70S ribosome.

Functionally, this is one of the proteins that bind and probably mediate the attachment of the 5S RNA into the large ribosomal subunit, where it forms part of the central protuberance. In the 70S ribosome it contacts protein S13 of the 30S subunit (bridge B1b), connecting the 2 subunits; this bridge is implicated in subunit movement. Contacts the P site tRNA; the 5S rRNA and some of its associated proteins might help stabilize positioning of ribosome-bound tRNAs. This Brucella abortus (strain S19) protein is Large ribosomal subunit protein uL5.